The following is a 478-amino-acid chain: Sodium-coupled neutral amino acid transporter 5 (478 aa).

The interval 1 to 20 (MAISSAEGMELQDPKMNGAL) is disordered. Over 1-57 (MAISSAEGMELQDPKMNGALPGNAVEQEHEGFLPSHSPSPGRKPAQFMDFEGKTSFG) the chain is Cytoplasmic. Residues 58–80 (MSVFNLSNAIMGSGILGLAYAMA) traverse the membrane as a helical segment. At 81-93 (HTGILLFLALLLC) the chain is on the extracellular side. Residues 94–114 (IALLSSYSIHLLLTCAGVVGI) traverse the membrane as a helical segment. Over 115 to 131 (RAYEQLGQRALGPAGKV) the chain is Cytoplasmic. A helical membrane pass occupies residues 132–152 (VVAAVICLHNVGAMSSYLFII). Topologically, residues 153–172 (KSELPLVIATFLDMDPEGDW) are extracellular. A helical transmembrane segment spans residues 173-193 (FLKGNLLIIIVSVLIILPLAL). The Cytoplasmic segment spans residues 194 to 198 (MRHLG). Residues 199 to 219 (YLGYTSGLSLTCMLFFLISVI) traverse the membrane as a helical segment. Topologically, residues 220–263 (YKKFQLGCTVGHNGTAVESKSSPSLPIHGLNTSCEAQMFTADSQ) are extracellular. An intrachain disulfide couples Cys227 to Cys253. Asn232 carries N-linked (GlcNAc...) asparagine glycosylation. Residues 264–284 (MFYTVPIMAFAFVCHPEVLPI) traverse the membrane as a helical segment. Residues 285-301 (YTELCRPSKRRMQAVAN) are Cytoplasmic-facing. The chain crosses the membrane as a helical span at residues 302–322 (VSIGAMFCMYGLTATFGYLTF). Residues 323–340 (YSSVEAEMLHMYSQHDLL) lie on the Extracellular side of the membrane. A helical membrane pass occupies residues 341–361 (ILCVRLAVLLAVTLTVPVVLF). The Cytoplasmic portion of the chain corresponds to 362–382 (PIRRALQQLLFPSKAFSWPRH). Residues 383 to 403 (VAIALILLVLVNVLVICVPTI) traverse the membrane as a helical segment. Topologically, residues 404-405 (RD) are extracellular. The helical transmembrane segment at 406 to 426 (IFGVIGSTSAPSLIFILPSIF) threads the bilayer. The Cytoplasmic portion of the chain corresponds to 427-445 (YLRIVPSEVEPLYSWPKIQ). Residues 446-466 (ALCFGVLGVLFMAISLGFMFA) traverse the membrane as a helical segment. Residues 467–478 (NWATGQSHVSGH) are Extracellular-facing.

It belongs to the amino acid/polyamine transporter 2 family.

The protein resides in the cell membrane. It catalyses the reaction L-serine(out) + Na(+)(out) + H(+)(in) = L-serine(in) + Na(+)(in) + H(+)(out). It carries out the reaction L-alanine(out) + Na(+)(out) + H(+)(in) = L-alanine(in) + Na(+)(in) + H(+)(out). The enzyme catalyses glycine(out) + Na(+)(out) + H(+)(in) = glycine(in) + Na(+)(in) + H(+)(out). The catalysed reaction is L-glutamine(out) + Na(+)(out) + H(+)(in) = L-glutamine(in) + Na(+)(in) + H(+)(out). It catalyses the reaction L-asparagine(out) + Na(+)(out) + H(+)(in) = L-asparagine(in) + Na(+)(in) + H(+)(out). It carries out the reaction L-histidine(out) + Na(+)(out) + H(+)(in) = L-histidine(in) + Na(+)(in) + H(+)(out). The enzyme catalyses L-cysteine(out) + Na(+)(out) + H(+)(in) = L-cysteine(in) + Na(+)(in) + H(+)(out). Its activity is regulated as follows. Not inhibited by lithium. Partial allosteric regulation on ions sodium binding. Functionally, symporter that cotransports neutral amino acids and sodium ions, coupled to an H(+) antiporter activity. Releases L-glutamine and glycine from astroglial cells and may participate in the glutamate/GABA-glutamine cycle and the NMDA receptors activation. In addition contributes significantly to L-glutamine uptake in retina, namely in ganglion and Mueller cells and, therefore participates in the retinal glutamate-glutamine cycle. The transport activity is pH sensitive, Li(+) tolerant, bidirectional and associated with large uncoupled fluxes of protons. The transport is electroneutral coupled to the cotransport of 1 Na(+) and the antiport of 1 H(+). May have particular importance for modulation of net hepatic glutamine flux. The chain is Sodium-coupled neutral amino acid transporter 5 from Bos taurus (Bovine).